The following is a 319-amino-acid chain: Methionyl-tRNA formyltransferase (319 aa).

(6S)-5,6,7,8-tetrahydrofolate is bound at residue 116–119 (SLLP).

This sequence belongs to the Fmt family.

The enzyme catalyses L-methionyl-tRNA(fMet) + (6R)-10-formyltetrahydrofolate = N-formyl-L-methionyl-tRNA(fMet) + (6S)-5,6,7,8-tetrahydrofolate + H(+). Attaches a formyl group to the free amino group of methionyl-tRNA(fMet). The formyl group appears to play a dual role in the initiator identity of N-formylmethionyl-tRNA by promoting its recognition by IF2 and preventing the misappropriation of this tRNA by the elongation apparatus. The protein is Methionyl-tRNA formyltransferase of Wigglesworthia glossinidia brevipalpis.